A 253-amino-acid chain; its full sequence is 3-deoxy-manno-octulosonate cytidylyltransferase (253 aa).

Belongs to the KdsB family.

The protein resides in the cytoplasm. The enzyme catalyses 3-deoxy-alpha-D-manno-oct-2-ulosonate + CTP = CMP-3-deoxy-beta-D-manno-octulosonate + diphosphate. The protein operates within nucleotide-sugar biosynthesis; CMP-3-deoxy-D-manno-octulosonate biosynthesis; CMP-3-deoxy-D-manno-octulosonate from 3-deoxy-D-manno-octulosonate and CTP: step 1/1. It participates in bacterial outer membrane biogenesis; lipopolysaccharide biosynthesis. Functionally, activates KDO (a required 8-carbon sugar) for incorporation into bacterial lipopolysaccharide in Gram-negative bacteria. This is 3-deoxy-manno-octulosonate cytidylyltransferase from Acidithiobacillus ferrooxidans (strain ATCC 23270 / DSM 14882 / CIP 104768 / NCIMB 8455) (Ferrobacillus ferrooxidans (strain ATCC 23270)).